The following is a 157-amino-acid chain: Ribosome-binding factor A (157 aa).

The interval 124–157 (SAGAQFAGDADPYRKPESDDESDTAAKTDGDAAE) is disordered. The span at 147 to 157 (TAAKTDGDAAE) shows a compositional bias: basic and acidic residues.

This sequence belongs to the RbfA family. In terms of assembly, monomer. Binds 30S ribosomal subunits, but not 50S ribosomal subunits or 70S ribosomes.

It localises to the cytoplasm. Functionally, one of several proteins that assist in the late maturation steps of the functional core of the 30S ribosomal subunit. Associates with free 30S ribosomal subunits (but not with 30S subunits that are part of 70S ribosomes or polysomes). Required for efficient processing of 16S rRNA. May interact with the 5'-terminal helix region of 16S rRNA. This chain is Ribosome-binding factor A, found in Streptomyces avermitilis (strain ATCC 31267 / DSM 46492 / JCM 5070 / NBRC 14893 / NCIMB 12804 / NRRL 8165 / MA-4680).